The following is a 416-amino-acid chain: MRYLFSSESVTEGHPDKICDQIADAILDALLTQDPQSRVAAEVVVNTGLVLITGEITTKAQVNYVNLARQKIHEIGYTDANNGFAANSCAVLVALDEQSPDIARGVDTAQEAREQLSDAELDRIGAGDQGIMFGYACNETPEYMPLPISLAHRMARRLAAVRKTGQLPYLRPDGKTQVTVIYEDGKPVGIDTILISTQHTATIDDISEESAVQAKIKADLWEAVVKPVFADLTLQPDGNTRFLVNPTGKFVIGGPQGDSGLTGRKLVVDTYGGYARHGGGAFSGKDPTKVDRSAAYMARYIAKNIVAAGLADKCELQISYAIGVARPMSLFVDTFGTGKLSPEQLLELIKTHFDLRPAAIIQTLNLRHLPQERGGRFYQDVAAYGHFGRHDLDLPWEKLDKVADLQAAAAQFLSAV.

Position 14 (His14) interacts with ATP. Asp16 contributes to the Mg(2+) binding site. Residue Glu42 participates in K(+) binding. Positions 55 and 98 each coordinate L-methionine. The interval 98–108 is flexible loop; sequence QSPDIARGVDT. ATP-binding positions include 173 to 175, 249 to 250, Asp258, 264 to 265, Ala281, and Lys285; these read DGK, KF, and RK. Asp258 lines the L-methionine pocket. An L-methionine-binding site is contributed by Lys289.

It belongs to the AdoMet synthase family. As to quaternary structure, homotetramer; dimer of dimers. The cofactor is Mg(2+). K(+) is required as a cofactor.

It localises to the cytoplasm. The enzyme catalyses L-methionine + ATP + H2O = S-adenosyl-L-methionine + phosphate + diphosphate. The protein operates within amino-acid biosynthesis; S-adenosyl-L-methionine biosynthesis; S-adenosyl-L-methionine from L-methionine: step 1/1. In terms of biological role, catalyzes the formation of S-adenosylmethionine (AdoMet) from methionine and ATP. The overall synthetic reaction is composed of two sequential steps, AdoMet formation and the subsequent tripolyphosphate hydrolysis which occurs prior to release of AdoMet from the enzyme. The chain is S-adenosylmethionine synthase from Thermosynechococcus vestitus (strain NIES-2133 / IAM M-273 / BP-1).